A 505-amino-acid polypeptide reads, in one-letter code: Glycerol kinase (505 aa).

Residue Thr-14 participates in ADP binding. The ATP site is built by Thr-14, Thr-15, and Ser-16. Thr-14 provides a ligand contact to sn-glycerol 3-phosphate. Arg-18 is a binding site for ADP. Sn-glycerol 3-phosphate contacts are provided by Arg-84, Glu-85, Tyr-136, and Asp-246. Residues Arg-84, Glu-85, Tyr-136, Asp-246, and Gln-247 each coordinate glycerol. ADP-binding residues include Thr-268 and Gly-311. ATP contacts are provided by Thr-268, Gly-311, Gln-315, and Gly-412. The ADP site is built by Gly-412 and Asn-416.

This sequence belongs to the FGGY kinase family.

It carries out the reaction glycerol + ATP = sn-glycerol 3-phosphate + ADP + H(+). Its pathway is polyol metabolism; glycerol degradation via glycerol kinase pathway; sn-glycerol 3-phosphate from glycerol: step 1/1. With respect to regulation, inhibited by fructose 1,6-bisphosphate (FBP). Key enzyme in the regulation of glycerol uptake and metabolism. Catalyzes the phosphorylation of glycerol to yield sn-glycerol 3-phosphate. The sequence is that of Glycerol kinase from Vibrio cholerae serotype O1 (strain ATCC 39315 / El Tor Inaba N16961).